A 242-amino-acid polypeptide reads, in one-letter code: Ribonuclease 3 (242 aa).

Residues 12 to 139 form the RNase III domain; that stretch reads ANELLEALGT…LIGATFLEHG (128 aa). Glu51 is a binding site for Mg(2+). Residue Asp55 is part of the active site. Mg(2+) is bound by residues Asp125 and Glu128. The active site involves Glu128. The 72-residue stretch at 165–236 folds into the DRBM domain; the sequence is LDWKTSLTVK…AEAGWKSLDS (72 aa).

It belongs to the ribonuclease III family. In terms of assembly, homodimer. Mg(2+) serves as cofactor.

The protein resides in the cytoplasm. It carries out the reaction Endonucleolytic cleavage to 5'-phosphomonoester.. Digests double-stranded RNA. Involved in the processing of primary rRNA transcript to yield the immediate precursors to the large and small rRNAs (23S and 16S). Processes some mRNAs, and tRNAs when they are encoded in the rRNA operon. Processes pre-crRNA and tracrRNA of type II CRISPR loci if present in the organism. This Bifidobacterium longum (strain NCC 2705) protein is Ribonuclease 3.